The chain runs to 561 residues: Lysine--tRNA ligase (561 aa).

Mg(2+)-binding residues include Glu-409 and Glu-416.

This sequence belongs to the class-II aminoacyl-tRNA synthetase family. In terms of assembly, homodimer. Mg(2+) is required as a cofactor.

The protein resides in the cytoplasm. The enzyme catalyses tRNA(Lys) + L-lysine + ATP = L-lysyl-tRNA(Lys) + AMP + diphosphate. In Nostoc punctiforme (strain ATCC 29133 / PCC 73102), this protein is Lysine--tRNA ligase.